The sequence spans 678 residues: Protein KHNYN (678 aa).

Serine 10 is modified (phosphoserine). Disordered regions lie at residues 222–251 (QGVRAPPSDGRESLDTGSMGPGDCRGARGD) and 347–407 (LHNG…ARGG). Residues 355–367 (PRVPSPPPAPEPP) are compositionally biased toward pro residues. A Phosphoserine modification is found at serine 359. A compositionally biased stretch (basic and acidic residues) spans 370–388 (CGDRGDCGDRGDVGDRGDK). Positions 437-589 (LRHIVIDGSN…LGRNGPTLDE (153 aa)) constitute an RNase NYN domain. The tract at residues 595–633 (ARTQGSSKAQHPSRGFAEHGKQQQGREEEKGSGGIRKTR) is disordered. Over residues 610-633 (FAEHGKQQQGREEEKGSGGIRKTR) the composition is skewed to basic and acidic residues.

Belongs to the N4BP1 family.

This Homo sapiens (Human) protein is Protein KHNYN (KHNYN).